We begin with the raw amino-acid sequence, 66 residues long: DNA-directed RNA polymerase subunit Rpo10 (66 aa).

Zn(2+)-binding residues include cysteine 7, cysteine 10, cysteine 44, and cysteine 45.

The protein belongs to the archaeal Rpo10/eukaryotic RPB10 RNA polymerase subunit family. Part of the RNA polymerase complex. The cofactor is Zn(2+).

The protein localises to the cytoplasm. The enzyme catalyses RNA(n) + a ribonucleoside 5'-triphosphate = RNA(n+1) + diphosphate. Functionally, DNA-dependent RNA polymerase (RNAP) catalyzes the transcription of DNA into RNA using the four ribonucleoside triphosphates as substrates. This Pyrobaculum islandicum (strain DSM 4184 / JCM 9189 / GEO3) protein is DNA-directed RNA polymerase subunit Rpo10.